The sequence spans 315 residues: tRNA pseudouridine synthase B (315 aa).

The Nucleophile role is filled by aspartate 47.

The protein belongs to the pseudouridine synthase TruB family. Type 1 subfamily.

It catalyses the reaction uridine(55) in tRNA = pseudouridine(55) in tRNA. Its function is as follows. Responsible for synthesis of pseudouridine from uracil-55 in the psi GC loop of transfer RNAs. This is tRNA pseudouridine synthase B from Shewanella amazonensis (strain ATCC BAA-1098 / SB2B).